The sequence spans 337 residues: Inositol 2-dehydrogenase (337 aa).

This sequence belongs to the Gfo/Idh/MocA family. As to quaternary structure, homotetramer.

It carries out the reaction myo-inositol + NAD(+) = scyllo-inosose + NADH + H(+). Functionally, involved in the oxidation of myo-inositol (MI) to 2-keto-myo-inositol (2KMI or 2-inosose). The chain is Inositol 2-dehydrogenase from Burkholderia multivorans (strain ATCC 17616 / 249).